Reading from the N-terminus, the 619-residue chain is Adagio protein 3 (619 aa).

Positions 44–123 (VGMFYYPMTP…SEIRRCLEEG (80 aa)) constitute a PAS domain. The residue at position 91 (Cys-91) is an S-4a-FMN cysteine. Positions 127-168 (QGELLNFRKDGTPLVNRLRLAPIRDDDGTITHVIGIQVFSET) constitute a PAC domain. The F-box domain maps to 211 to 257 (ILQLSDEVLAHNILSRLTPRDVASIGSACRRLRQLTKNESVRKMVCQ). Kelch repeat units follow at residues 304-354 (SRCN…TSSP), 357-404 (RWGH…AGGT), 409-457 (RSWH…PTSW), 462-513 (RLGH…ECSA), and 523-571 (RLDH…NVPG).

It belongs to the ADAGIO family. Interacts with ADO1 (via Kelch repeats), ADO2 (via Kelch repeats), SKP1A/ASK1, SKP1B/ASK2, ASK3, SKP1K/ASK11, ASK12, ASK13 and SKP1N/ASK14. Interacts (via Kelch repeats) with CDF1, CDF2 and CDF3. Interacts (via N-terminus) with CO and GI (via N-terminus) in a blue-light-dependent manner. Post-translationally, FMN binds covalently to cysteine after exposure to blue light and is reversed in the dark. In terms of tissue distribution, highly expressed in stomata and leaves and to a lower extent in seeds, roots, rosettes, stems and siliques. Also present in sepals and anther filaments.

It localises to the nucleus. Its subcellular location is the cytoplasm. Its pathway is protein modification; protein ubiquitination. In terms of biological role, component of an E3 ubiquitin ligase complex that plays a central role in blue light-dependent circadian cycles. Acts as a blue light photoreceptor, due to the presence of FMN, that mediates light-regulated protein degradation of critical clock components by targeting them to the proteasome complex. The SCF(ADO3) E3 ubiquitin ligase complex is involved in the regulation of circadian clock-dependent processes including transition to flowering time, hypocotyl elongation, cotyledons and leaf movement rhythms. Forms a complex with 'GIGANTEA' (GI) to regulate 'CONSTANS' (CO) expression. Promotes CO expression during the light period of long days by decreasing the stability of CDF1 and CDF2 and by interacting directly with the CO protein and stabilizing it. ADO3 function is mainly GI dependent. Does not act as a regulator of CDF1 transcription. The interactions of ADO1/ZTL and ADO2 with ADO3 prevent its interaction with CDF1. This is Adagio protein 3 (ADO3) from Arabidopsis thaliana (Mouse-ear cress).